Reading from the N-terminus, the 647-residue chain is MKKEEYLEKVALANLWMRAYYEKDEPLASDEEYDALIRELRVFEEQNKDEISKDSPTQKIAPTIQSEFKKIAHLKRMWSMEDVFDESELRAWAKRAKCEKNFFIEPKFDGASLNLLYENGKLVSGATRGDGEVGEDITLNVFEIENIPKNIAYKERIEIRGEVVILKDDFEKINEKRALLNQSLFANPRNAASGSLRQLDTSITKERNLKFYPWGVGENTLNFTKHSEVMQFIRELGFLKDDFVRLCANLDEVLKAYDELLVLREKKPMMMDGMVVRVDDLALCEELGYTVKFPKFMAAFKFPALEKTTRLIGVNLQVGRSGAITPVAVLEPVNLDGVVVKSATLHNFDEIARLDVKINDFVSVIRSGDVIPKITKVFKERREGLEMEISRPKLCPTCQSELLDEGTLIKCQNIDCEDRLVNSIIHFVSKKCLNIDGLGENIVELLYKHKKITTLESIFHLKFNDFEGLEGFKEKKINNLLNAIEQARECELFRFITALGIEHIGEVAAKKLSLSFGKEWYKQSFEAYANLEGFGEQMALSLCEFTRVNHTRIDEFYKLLNLKIEKLEIKSDGVIFGKTFVITGTLSRPRDEFKALIEKLGGKVSGSVSKKTDYVLFGEEAGSKLSKAKELEVKCIDESAFNELVKE.

NAD(+) is bound by residues 30–34 (DEEYD), 79–80 (SM), and Glu105. Lys107 acts as the N6-AMP-lysine intermediate in catalysis. Arg128, Glu162, and Lys301 together coordinate NAD(+). Zn(2+) is bound by residues Cys395, Cys398, Cys411, and Cys416. The BRCT domain occupies 570–647 (KSDGVIFGKT…ESAFNELVKE (78 aa)).

Belongs to the NAD-dependent DNA ligase family. LigA subfamily. It depends on Mg(2+) as a cofactor. Requires Mn(2+) as cofactor.

The enzyme catalyses NAD(+) + (deoxyribonucleotide)n-3'-hydroxyl + 5'-phospho-(deoxyribonucleotide)m = (deoxyribonucleotide)n+m + AMP + beta-nicotinamide D-nucleotide.. Functionally, DNA ligase that catalyzes the formation of phosphodiester linkages between 5'-phosphoryl and 3'-hydroxyl groups in double-stranded DNA using NAD as a coenzyme and as the energy source for the reaction. It is essential for DNA replication and repair of damaged DNA. The polypeptide is DNA ligase (Campylobacter jejuni (strain RM1221)).